The chain runs to 384 residues: Protein RecA (384 aa).

76–83 lines the ATP pocket; it reads GPESSGKT. The interval 346 to 365 is disordered; sequence QGSAEPEKAAKPEKVEKADK. Residues 350–365 are compositionally biased toward basic and acidic residues; it reads EPEKAAKPEKVEKADK.

The protein belongs to the RecA family.

It localises to the cytoplasm. Can catalyze the hydrolysis of ATP in the presence of single-stranded DNA, the ATP-dependent uptake of single-stranded DNA by duplex DNA, and the ATP-dependent hybridization of homologous single-stranded DNAs. It interacts with LexA causing its activation and leading to its autocatalytic cleavage. The chain is Protein RecA from Polaromonas naphthalenivorans (strain CJ2).